We begin with the raw amino-acid sequence, 953 residues long: TPR repeat-containing protein ZIP4 (953 aa).

A TPR 1 repeat occupies 129–162; sequence ASFFHRSGLAWLDLGRVDLASACFEKATPLVSAA. Positions 248–269 are disordered; that stretch reads AASPSSSSPRTPPYGGATPKTP. TPR repeat units follow at residues 432 to 465 and 473 to 506; these read HALLWNCGTEHFRAKNYDTSADLIERSMLYVSRD and ADCFRVLSICHIALQHLDRALEFVNEAYKVEPNI. The tract at residues 925 to 953 is disordered; the sequence is VSGDEPDECSQEEAPKASISGSMSQPVLV. The span at 943 to 953 shows a compositional bias: polar residues; the sequence is ISGSMSQPVLV.

Interacts with HEI10 and SHOC1.

The protein resides in the nucleus. Its subcellular location is the chromosome. Required for crossover formation, complete synapsis of homologous chromosomes and bivalent formation during meiosis. Is specific to recombination events resulting in interference-sensitive crossovers (class I meiotic crossover) and works cooperatively with MER3 to promote crossovers. The chain is TPR repeat-containing protein ZIP4 from Oryza sativa subsp. japonica (Rice).